The sequence spans 273 residues: Release factor glutamine methyltransferase (273 aa).

S-adenosyl-L-methionine contacts are provided by residues 109-113, Asp132, Trp159, and Asn176; that span reads GTGSG. 176–179 lines the substrate pocket; that stretch reads NPPY.

The protein belongs to the protein N5-glutamine methyltransferase family. PrmC subfamily.

The enzyme catalyses L-glutaminyl-[peptide chain release factor] + S-adenosyl-L-methionine = N(5)-methyl-L-glutaminyl-[peptide chain release factor] + S-adenosyl-L-homocysteine + H(+). Its function is as follows. Methylates the class 1 translation termination release factors RF1/PrfA and RF2/PrfB on the glutamine residue of the universally conserved GGQ motif. This is Release factor glutamine methyltransferase from Neisseria gonorrhoeae (strain ATCC 700825 / FA 1090).